A 416-amino-acid polypeptide reads, in one-letter code: MKSYLVGGAVRDALLGQPAGDCDWVVVGADPAHMESLGFKAVGRDFPVFLHPKTGEEFALARTERKNGHGYRGFIVNADPTVTLEQDLQRRDFTINAIAHDQTNDTLIDPYGGVNDLEQRILRHISPAFAEDPLRVLRAARFMARLAPLGFSIAPETLTMMREMAASGELNSLIPERIWKELSRSLAYTQPAAFLHTLRTVNALEVVLPELNALYGVPQHADYHPEIDTGLHQELVSDMAAKLAPGDMLIGFAALCHDLGKALTPRATWPHHPMHEQRGMAPTQQLSERLKVPRDYQQLALIACREHLNVHRLSKLHDHTVYELLQRCDAFRRPERIAQLAIVCEADYRGRYGHEDANYPQGQHLCRLHAAALAVNARDLNRQDLHGTQIGEALAQARIRAISSTGVYDGGTRTNF.

Glycine 8 and arginine 11 together coordinate ATP. 2 residues coordinate CTP: glycine 8 and arginine 11. Residues aspartate 21 and aspartate 23 each coordinate Mg(2+). ATP-binding residues include arginine 91, arginine 138, and arginine 141. 3 residues coordinate CTP: arginine 91, arginine 138, and arginine 141. Residues 229-331 form the HD domain; it reads TGLHQELVSD…YELLQRCDAF (103 aa).

It belongs to the tRNA nucleotidyltransferase/poly(A) polymerase family. Bacterial CCA-adding enzyme type 1 subfamily. In terms of assembly, monomer. Can also form homodimers and oligomers. Requires Mg(2+) as cofactor. The cofactor is Ni(2+).

It carries out the reaction a tRNA precursor + 2 CTP + ATP = a tRNA with a 3' CCA end + 3 diphosphate. The enzyme catalyses a tRNA with a 3' CCA end + 2 CTP + ATP = a tRNA with a 3' CCACCA end + 3 diphosphate. Functionally, catalyzes the addition and repair of the essential 3'-terminal CCA sequence in tRNAs without using a nucleic acid template. Adds these three nucleotides in the order of C, C, and A to the tRNA nucleotide-73, using CTP and ATP as substrates and producing inorganic pyrophosphate. tRNA 3'-terminal CCA addition is required both for tRNA processing and repair. Also involved in tRNA surveillance by mediating tandem CCA addition to generate a CCACCA at the 3' terminus of unstable tRNAs. While stable tRNAs receive only 3'-terminal CCA, unstable tRNAs are marked with CCACCA and rapidly degraded. The polypeptide is Multifunctional CCA protein (Xylella fastidiosa (strain 9a5c)).